A 292-amino-acid chain; its full sequence is Keratin-associated protein 10-9 (292 aa).

25 tandem repeats follow at residues 26-30 (CCEPP), 31-35 (CCATS), 36-40 (CCAPA), 57-61 (CCQVT), 79-83 (CCQQS), 99-103 (CCVPV), 104-108 (CCKPV), 109-113 (CCVPV), 114-118 (CCGAS), 120-124 (CCQQS), 130-134 (CCASS), 140-144 (CCVPV), 145-149 (CCKPV), 150-154 (CCAPT), 162-166 (CCQQS), 172-176 (CCTSS), 182-186 (YCVPV), 187-191 (CCKPV), 192-196 (CCKPI), 197-201 (CCVPV), 209-213 (CCQQS), 219-223 (CCTTS), 224-228 (CCRPS), 243-247 (CCVPV), and 250-254 (CCAPT). The tract at residues 26–254 (CCEPPCCATS…VPVSSCCAPT (229 aa)) is 25 X 5 AA repeats of C-C-X(3).

The protein belongs to the KRTAP type 10 family. In terms of assembly, interacts with hair keratins. As to expression, restricted to a narrow region of the hair fiber cuticle, lying approximately 20 cell layers above the apex of the dermal papilla of the hair root; not detected in any other tissues.

Its function is as follows. In the hair cortex, hair keratin intermediate filaments are embedded in an interfilamentous matrix, consisting of hair keratin-associated proteins (KRTAP), which are essential for the formation of a rigid and resistant hair shaft through their extensive disulfide bond cross-linking with abundant cysteine residues of hair keratins. The matrix proteins include the high-sulfur and high-glycine-tyrosine keratins. The protein is Keratin-associated protein 10-9 (KRTAP10-9) of Homo sapiens (Human).